The sequence spans 835 residues: Protein translocase subunit SecA (835 aa).

Residues glutamine 85, 103–107 (GEGKT), and aspartate 492 contribute to the ATP site. Residues 788 to 807 (VQGEAVHPSSDGEEAKKKPV) are disordered. Residues cysteine 819, cysteine 821, cysteine 830, and cysteine 831 each contribute to the Zn(2+) site.

This sequence belongs to the SecA family. As to quaternary structure, monomer and homodimer. Part of the essential Sec protein translocation apparatus which comprises SecA, SecYEG and auxiliary proteins SecDF. Other proteins may also be involved. Zn(2+) is required as a cofactor.

Its subcellular location is the cell membrane. The protein resides in the cytoplasm. The enzyme catalyses ATP + H2O + cellular proteinSide 1 = ADP + phosphate + cellular proteinSide 2.. Part of the Sec protein translocase complex. Interacts with the SecYEG preprotein conducting channel. Has a central role in coupling the hydrolysis of ATP to the transfer of proteins into and across the cell membrane, serving as an ATP-driven molecular motor driving the stepwise translocation of polypeptide chains across the membrane. The polypeptide is Protein translocase subunit SecA (Bacillus cereus (strain ATCC 10987 / NRS 248)).